The sequence spans 149 residues: Arginine repressor (149 aa).

It belongs to the ArgR family.

The protein resides in the cytoplasm. The protein operates within amino-acid biosynthesis; L-arginine biosynthesis [regulation]. Functionally, regulates arginine biosynthesis genes. This Exiguobacterium sp. (strain ATCC BAA-1283 / AT1b) protein is Arginine repressor.